A 263-amino-acid polypeptide reads, in one-letter code: Phosphatidylglycerol--prolipoprotein diacylglyceryl transferase (263 aa).

4 helical membrane passes run 6 to 26, 50 to 70, 85 to 105, and 112 to 132; these read VIFSIGPVSIYWYSLAYVLGI, LLTATIVGIILGGRLGYVLIY, TWEGGMSFHGGAIGVLLAVII, and IPIFYALDLVSCGVPIGLFLG. Arg133 lines the a 1,2-diacyl-sn-glycero-3-phospho-(1'-sn-glycerol) pocket. 3 consecutive transmembrane segments (helical) span residues 169-189, 197-217, and 233-253; these read LYEALFEGLLLFAVANSLFFL, GALTGIAVMWYGIARFFVEFF, and MGQLLSIPMVLLGMLVYLGAL.

The protein belongs to the Lgt family.

Its subcellular location is the cell membrane. It catalyses the reaction L-cysteinyl-[prolipoprotein] + a 1,2-diacyl-sn-glycero-3-phospho-(1'-sn-glycerol) = an S-1,2-diacyl-sn-glyceryl-L-cysteinyl-[prolipoprotein] + sn-glycerol 1-phosphate + H(+). It functions in the pathway protein modification; lipoprotein biosynthesis (diacylglyceryl transfer). Functionally, catalyzes the transfer of the diacylglyceryl group from phosphatidylglycerol to the sulfhydryl group of the N-terminal cysteine of a prolipoprotein, the first step in the formation of mature lipoproteins. The sequence is that of Phosphatidylglycerol--prolipoprotein diacylglyceryl transferase from Wolbachia sp. subsp. Drosophila simulans (strain wRi).